An 82-amino-acid polypeptide reads, in one-letter code: KappaPI-actitoxin-Avd3e (82 aa).

Residues 1–16 (MVFLLCFFLVADVSYG) form the signal peptide. In terms of domain architecture, BPTI/Kunitz inhibitor spans 21 to 71 (CELPKVVGPCRARFPRYYYNSSSKRCEKFIYGGCGGNANNFHTLEECEKVC). Intrachain disulfides connect Cys-21-Cys-71, Cys-30-Cys-54, and Cys-46-Cys-67. The propeptide occupies 76–82 (RDSPKEN).

The protein belongs to the venom Kunitz-type family. Sea anemone type 2 potassium channel toxin subfamily.

It is found in the secreted. The protein resides in the nematocyst. Its function is as follows. Serine protease inhibitor that inhibits both tissue and plasma kallikreins. Has hemolytic activity. Inhibits voltage-gated potassium channels (Kv). This Anemonia viridis (Snakelocks anemone) protein is KappaPI-actitoxin-Avd3e.